A 292-amino-acid polypeptide reads, in one-letter code: MNTANTLDGKFVTEGSWRPDLFKGKVAFVTGGAGTICRVQTEALVLLGCKAAIVGRDQERTEQAAKGISQLAKDKDAVLAIANVDVRNFEQVENAVKKTVEKFGKIDFVIAGAAGNFVCDFANLSPNAFKSVVDIDLLGSFNTAKACLKELKKSKGSILFVSATFHYYGVPFQGHVGAAKAGIDALAKNLAVELGPLGIRSNCIAPGAIDNTEGLKRLAGKKYKEKALAKIPLQRLGSTRDIAESTVYIFSPAASYVTGTVLVVDGGMWHLGTYFGHELYPEALIKSMTSKL.

NADP(+) is bound by residues Ile36, Asp85, and Lys145. Residue Ser162 is the Proton donor of the active site. Lys180 contributes to the NADP(+) binding site. Residue Lys180 is the Lowers pKa of active site Tyr of the active site. A Glycyl lysine isopeptide (Lys-Gly) (interchain with G-Cter in ubiquitin) cross-link involves residue Lys188. Residue Ile209 participates in NADP(+) binding. The short motif at 290–292 (SKL) is the Microbody targeting signal element.

The protein belongs to the short-chain dehydrogenases/reductases (SDR) family. In terms of assembly, homodimer.

It is found in the peroxisome. The catalysed reaction is a (2E,4Z)-dienoyl-CoA + NADPH + H(+) = a 4,5-saturated-(3E)-enoyl-CoA + NADP(+). It catalyses the reaction a (2E,4E)-dienoyl-CoA + NADPH + H(+) = a 4,5-saturated-(3E)-enoyl-CoA + NADP(+). Auxiliary enzyme of beta-oxidation. Participates in the degradation of unsaturated fatty enoyl-CoA esters having double bonds in both even- and odd-numbered positions in peroxisome. Catalyzes the NADP-dependent reduction of 2,4-dienoyl-CoA to yield trans-3-enoyl-CoA. Dispensable for growth and sporulation on solid acetate and oleate media, but is essential for these processes to occur on petroselineate. This chain is Peroxisomal 2,4-dienoyl-CoA reductase SPS19 [(3E)-enoyl-CoA-producing] (SPS19), found in Saccharomyces cerevisiae (strain ATCC 204508 / S288c) (Baker's yeast).